The sequence spans 330 residues: tRNA-modifying protein YgfZ (330 aa).

2 residues coordinate folate: W28 and W190.

This sequence belongs to the tRNA-modifying YgfZ family.

Its subcellular location is the cytoplasm. Folate-binding protein involved in regulating the level of ATP-DnaA and in the modification of some tRNAs. It is probably a key factor in regulatory networks that act via tRNA modification, such as initiation of chromosomal replication. This chain is tRNA-modifying protein YgfZ, found in Serratia proteamaculans (strain 568).